Here is a 1112-residue protein sequence, read N- to C-terminus: Rho GTPase-activating protein 7 (1112 aa).

The region spanning 37 to 104 is the SAM domain; sequence LAEIEAKEAC…LNKCAVMKLE (68 aa). Phosphoserine occurs at positions 112, 115, and 155. Disordered regions lie at residues 146–203, 318–350, 405–459, and 512–574; these read SPKQ…APAR, RSISSSTQTSSSSSQSETSSNVSTPSPVTRTRS, PKAL…VSSR, and SDEG…GVGA. Residues 183–193 show a composition bias toward polar residues; sequence VHSTGSLTTHA. Residues 296–468 are focal adhesion-targeting (FAT); sequence QLNCVEISAL…RLSIYDNVPG (173 aa). 2 stretches are compositionally biased toward low complexity: residues 320–348 and 409–423; these read ISSSTQTSSSSSQSETSSNVSTPSPVTRT and SNGSFSPSGNNSSVN. A Phosphoserine modification is found at S343. The span at 437–446 shows a compositional bias: basic and acidic residues; it reads LRRENSSPKE. Polar residues predominate over residues 520–532; the sequence is ALDSVSPCPSSPK. A compositionally biased stretch (basic and acidic residues) spans 534 to 544; it reads IHLDVDNDRAT. The span at 547–556 shows a compositional bias: polar residues; sequence DLDSTGNSLN. The tract at residues 635 to 657 is polybasic cluster (PBR); the sequence is KHGFSWAVPKFMKRIKVPDYKDR. The Rho-GAP domain occupies 662-868; the sequence is VPLTVNVQRT…HMIAECKKLF (207 aa). Positions 898-1105 constitute an START domain; sequence CNDDSADYQH…RDSFSHQNTE (208 aa).

As to quaternary structure, interacts with EF1A1, facilitates EF1A1 distribution to the membrane periphery and ruffles upon growth factor stimulation and suppresses cell migration. Interacts with tensin TNS1 (via N-terminus); the interaction is decreased by phosphorylation of TNS1. Interacts with TNS3 and PTEN; in resting cells, interacts with TNS3 (via C2 tensin-type domain) but, following growth factor stimulation, TNS3 and PTEN are phosphorylated which leads to weakened interaction with TNS3 and enhanced interaction with PTEN. Interacts (via C-terminus) with tensin TNS4 (via SH2 domain); the interaction is independent of tyrosine phosphorylation of DLC1.

The protein resides in the cytoplasm. It is found in the cell junction. It localises to the focal adhesion. The protein localises to the membrane. In terms of biological role, functions as a GTPase-activating protein for the small GTPases RHOA, RHOB, RHOC and CDC42, terminating their downstream signaling. This induces morphological changes and detachment through cytoskeletal reorganization, playing a critical role in biological processes such as cell migration and proliferation. Also functions in vivo as an activator of the phospholipase PLCD1. Active DLC1 increases cell migration velocity but reduces directionality. Required for growth factor-induced epithelial cell migration; in resting cells, interacts with TNS3 while PTEN interacts with the p85 regulatory subunit of the PI3K kinase complex but growth factor stimulation induces phosphorylation of TNS3 and PTEN, causing them to change their binding preference so that PTEN interacts with DLC1 and TNS3 interacts with p85. The PTEN-DLC1 complex translocates to the posterior of migrating cells to activate RHOA while the TNS3-p85 complex translocates to the leading edge of migrating cells to promote RAC1 activation. This is Rho GTPase-activating protein 7 (DLC1) from Bos taurus (Bovine).